A 672-amino-acid polypeptide reads, in one-letter code: Threonine--tRNA ligase (672 aa).

Positions 1 to 64 (MTELLKISLP…EGDAELALIT (64 aa)) constitute a TGS domain. Positions 257–566 (DHRKLGREMD…LIEHFAGRLP (310 aa)) are catalytic. Residues Cys-362, His-413, and His-543 each coordinate Zn(2+).

This sequence belongs to the class-II aminoacyl-tRNA synthetase family. As to quaternary structure, homodimer. Zn(2+) is required as a cofactor.

It is found in the cytoplasm. The catalysed reaction is tRNA(Thr) + L-threonine + ATP = L-threonyl-tRNA(Thr) + AMP + diphosphate + H(+). In terms of biological role, catalyzes the attachment of threonine to tRNA(Thr) in a two-step reaction: L-threonine is first activated by ATP to form Thr-AMP and then transferred to the acceptor end of tRNA(Thr). Also edits incorrectly charged L-seryl-tRNA(Thr). This chain is Threonine--tRNA ligase, found in Erythrobacter litoralis (strain HTCC2594).